Consider the following 140-residue polypeptide: MKGFEFFDVTADAGFWAYGHDLEEVFENAALAMFEVMTDTSLVEAAEERRVEITSEDRVSLLYDWLDELLFIHDTEFILFSKFKVKIDEKDDGLHLTGTAMGEEIKEGHERRDEVKAVTFHMMEILDEDGLIKARVILDL.

The Ca(2+) site is built by Asp12, Asp139, and Leu140.

The protein belongs to the archease family.

In terms of biological role, activates the tRNA-splicing ligase complex by facilitating the enzymatic turnover of catalytic subunit RtcB. Acts by promoting the guanylylation of RtcB, a key intermediate step in tRNA ligation. Can also alter the NTP specificity of RtcB such that ATP, dGTP or ITP is used efficiently. May also act as a chaperone or modulator of proteins involved in DNA or RNA processing. This is Protein archease from Methanothermobacter thermautotrophicus (strain ATCC 29096 / DSM 1053 / JCM 10044 / NBRC 100330 / Delta H) (Methanobacterium thermoautotrophicum).